The primary structure comprises 94 residues: Surfactant-associated protein 3 (94 aa).

As to expression, found in lung alveolar cells type I and II, as well as alveolar macrophages (at protein level). Detected also in testis and kidney. Expressed by different tissues of the ocular system like cornea, conjuctiva, lacrimal gland, eyelid and efferent tear ducts (at protein level). From these tissues is secreted into the tear film (at protein level).

It localises to the cytoplasm. The protein localises to the secreted. Putative surfactant protein. May be involved in wound healing and in the reduction of the surface tension at the ocular surface. This Homo sapiens (Human) protein is Surfactant-associated protein 3 (SFTA3).